The sequence spans 328 residues: Malate dehydrogenase (328 aa).

Residue 12-18 (GAAGQIG) participates in NAD(+) binding. Substrate is bound by residues Arg95 and Arg101. NAD(+) contacts are provided by residues Asn108, Gln115, and 132–134 (VGN). Positions 134 and 165 each coordinate substrate. His190 serves as the catalytic Proton acceptor.

Belongs to the LDH/MDH superfamily. MDH type 2 family.

The enzyme catalyses (S)-malate + NAD(+) = oxaloacetate + NADH + H(+). Functionally, catalyzes the reversible oxidation of malate to oxaloacetate. In Leptothrix cholodnii (strain ATCC 51168 / LMG 8142 / SP-6) (Leptothrix discophora (strain SP-6)), this protein is Malate dehydrogenase.